The primary structure comprises 80 residues: Phycocyanin-645 alpha-1 chain (80 aa).

Residue R16 coordinates (2R,3E)-phycocyanobilin. The mesobiliverdin site is built by C18, Q24, Y25, and K40. Positions 71 and 73 each coordinate 15,16-dihydrobiliverdin.

This sequence belongs to the phycoerythrin family. Heterotetramer of 2 different alpha chains and 2 identical beta chains which form 2 alpha-beta heterodimers within the heterotetramer. Post-translationally, contains one phycocyanobilin chromophore, one mesobiliverdin chromophore and one 15,16-dihydrobiliverdin chromophore with binding mediated by both the alpha and beta subunits.

It is found in the plastid. It localises to the chloroplast thylakoid membrane. Light-harvesting photosynthetic tetrapyrrole chromophore-protein from the phycobiliprotein complex. The polypeptide is Phycocyanin-645 alpha-1 chain (Chroomonas sp).